A 200-amino-acid polypeptide reads, in one-letter code: High mobility group protein 1 homolog (200 aa).

2 DNA-binding regions (HMG box) span residues 11–81 and 100–168; these read PRGR…QSYK and PKRN…AEYK. Over residues 64–86 the composition is skewed to basic and acidic residues; it reads EKSMRDKVRYDREMQSYKPPKGE. Disordered regions lie at residues 64–103 and 169–200; these read EKSM…PKRN and AKAK…DDSD. Residues 190 to 200 are compositionally biased toward acidic residues; it reads SSDDSSSDDSD.

This sequence belongs to the HMGB family.

Its subcellular location is the nucleus. It localises to the chromosome. In terms of biological role, binds preferentially single-stranded DNA and unwinds double-stranded DNA. This is High mobility group protein 1 homolog (HMG1) from Strongylocentrotus purpuratus (Purple sea urchin).